We begin with the raw amino-acid sequence, 517 residues long: Crotonobetaine/carnitine--CoA ligase (517 aa).

It belongs to the ATP-dependent AMP-binding enzyme family.

It carries out the reaction 4-(trimethylamino)butanoate + ATP + CoA = 4-(trimethylamino)butanoyl-CoA + AMP + diphosphate. The catalysed reaction is crotonobetaine + ATP + CoA = crotonobetainyl-CoA + AMP + diphosphate. The enzyme catalyses (R)-carnitine + ATP + CoA = (R)-carnitinyl-CoA + AMP + diphosphate. It functions in the pathway amine and polyamine metabolism; carnitine metabolism. Catalyzes the transfer of CoA to carnitine, generating the initial carnitinyl-CoA needed for the CaiB reaction cycle. Also has activity toward crotonobetaine and gamma-butyrobetaine. The sequence is that of Crotonobetaine/carnitine--CoA ligase from Salmonella choleraesuis (strain SC-B67).